A 387-amino-acid chain; its full sequence is tRNA pseudouridine synthase B (387 aa).

The active-site Nucleophile is Asp-43.

It belongs to the pseudouridine synthase TruB family. Type 1 subfamily.

It carries out the reaction uridine(55) in tRNA = pseudouridine(55) in tRNA. In terms of biological role, responsible for synthesis of pseudouridine from uracil-55 in the psi GC loop of transfer RNAs. This is tRNA pseudouridine synthase B from Bifidobacterium longum (strain NCC 2705).